The following is a 365-amino-acid chain: Chorismate synthase (365 aa).

Residues Arg48 and Arg54 each contribute to the NADP(+) site. FMN is bound by residues 125 to 127, 237 to 238, Gly277, 292 to 296, and Arg318; these read RAS, NA, and KPTSS.

The protein belongs to the chorismate synthase family. Homotetramer. The cofactor is FMNH2.

It carries out the reaction 5-O-(1-carboxyvinyl)-3-phosphoshikimate = chorismate + phosphate. Its pathway is metabolic intermediate biosynthesis; chorismate biosynthesis; chorismate from D-erythrose 4-phosphate and phosphoenolpyruvate: step 7/7. Functionally, catalyzes the anti-1,4-elimination of the C-3 phosphate and the C-6 proR hydrogen from 5-enolpyruvylshikimate-3-phosphate (EPSP) to yield chorismate, which is the branch point compound that serves as the starting substrate for the three terminal pathways of aromatic amino acid biosynthesis. This reaction introduces a second double bond into the aromatic ring system. The chain is Chorismate synthase from Polaromonas sp. (strain JS666 / ATCC BAA-500).